The following is a 281-amino-acid chain: MKMDSSSIRELRDRTGLGLSDCKKALEECDGDIKKAVDRLRTIGFAKADKKSDRVASDGLIAMCLAKNYGVLVKVNCETDFVARNEKFIALVSNLASIACQERCTSLDELKNAKYEDVGTVQEAIISGTSVLGEKLELSNLCYLETKDGIIAGYVHGDMHGLGKIGALVALQSSGDKQEIGKQIAMHVVAMKPEALSIDDLDQEKLNNERSIIEEQVKSLNKPEEVAKKIVDGRMAKYYEEVVLLEQKFIKDDKMKIADFIESSAVKLANYKLLTLDGANK.

Residues 79-82 (TDFV) form an involved in Mg(2+) ion dislocation from EF-Tu region.

This sequence belongs to the EF-Ts family.

It is found in the cytoplasm. Its function is as follows. Associates with the EF-Tu.GDP complex and induces the exchange of GDP to GTP. It remains bound to the aminoacyl-tRNA.EF-Tu.GTP complex up to the GTP hydrolysis stage on the ribosome. The sequence is that of Elongation factor Ts from Wolbachia pipientis subsp. Culex pipiens (strain wPip).